Consider the following 179-residue polypeptide: Arginine repressor (179 aa).

Belongs to the ArgR family.

The protein resides in the cytoplasm. The protein operates within amino-acid biosynthesis; L-arginine biosynthesis [regulation]. In terms of biological role, regulates arginine biosynthesis genes. The protein is Arginine repressor of Renibacterium salmoninarum (strain ATCC 33209 / DSM 20767 / JCM 11484 / NBRC 15589 / NCIMB 2235).